The chain runs to 92 residues: MKITTSIELLDWFKSVVDIDSDYMVSKLTGIPKQTLSTVRTGNSEFSDYTALKLLLVGEHPEPLKGMALLEAHKAERNGNEEQAKLWRKSVA.

This is an uncharacterized protein from Pseudoalteromonas phage PM2 (Bacteriophage PM2).